A 218-amino-acid chain; its full sequence is Pyridoxal 5'-phosphate synthase subunit PdxT (218 aa).

54–56 (GES) is a binding site for L-glutamine. The active-site Nucleophile is the Cys86. Residues Arg120 and 149–150 (IR) each bind L-glutamine. Catalysis depends on charge relay system residues His197 and Glu199.

The protein belongs to the glutaminase PdxT/SNO family. In the presence of PdxS, forms a dodecamer of heterodimers. Only shows activity in the heterodimer.

It catalyses the reaction aldehydo-D-ribose 5-phosphate + D-glyceraldehyde 3-phosphate + L-glutamine = pyridoxal 5'-phosphate + L-glutamate + phosphate + 3 H2O + H(+). The enzyme catalyses L-glutamine + H2O = L-glutamate + NH4(+). It participates in cofactor biosynthesis; pyridoxal 5'-phosphate biosynthesis. In terms of biological role, catalyzes the hydrolysis of glutamine to glutamate and ammonia as part of the biosynthesis of pyridoxal 5'-phosphate. The resulting ammonia molecule is channeled to the active site of PdxS. The protein is Pyridoxal 5'-phosphate synthase subunit PdxT of Saccharopolyspora erythraea (strain ATCC 11635 / DSM 40517 / JCM 4748 / NBRC 13426 / NCIMB 8594 / NRRL 2338).